Here is a 5087-residue protein sequence, read N- to C-terminus: Nonribosomal peptide synthetase sidC (5087 aa).

The adenylation 1 stretch occupies residues 165-563; it reads HEMVRHTGNE…NGELQCMGRI (399 aa). Residues 671–744 enclose the Carrier 1 domain; the sequence is EPAGDIEQKI…KMAALVLKSQ (74 aa). An O-(pantetheine 4'-phosphoryl)serine modification is found at S705. The interval 782-1112 is condensation 1; sequence DIIPCSPIQT…LFDTLFVWQD (331 aa). The segment at 1217-1611 is adenylation 2; the sequence is ELAKTDSERI…GRRDDLVKIR (395 aa). The Carrier 2 domain maps to 1740–1817; the sequence is ENLTDNEAKV…RLTRKISQSI (78 aa). The residue at position 1777 (S1777) is an O-(pantetheine 4'-phosphoryl)serine. Residues 1855–2272 form a condensation 2 region; sequence KILPCTSLQE…RVMDFSLVES (418 aa). A Carrier 3 domain is found at 2302–2378; sequence EEWSAESLEI…EIASVLQGSK (77 aa). S2339 carries the post-translational modification O-(pantetheine 4'-phosphoryl)serine. The segment at 2419 to 2831 is condensation 3; that stretch reads PCTTPQAGML…STSSSLDTAS (413 aa). The tract at residues 2860–3258 is adenylation 3; it reads ATRHPSRVAL…GRIDDQVKLR (399 aa). A Carrier 4 domain is found at 3387–3464; it reads TEDTDTIRKI…LLAKAVESPD (78 aa). At S3424 the chain carries O-(pantetheine 4'-phosphoryl)serine. Positions 3506–3910 are condensation 4; it reads ITPCTSLQDG…RSLVEEPFSN (405 aa). One can recognise a Carrier 5 domain in the interval 3943–4019; that stretch reads FQWSQAASLL…TMMAEVTVNG (77 aa). Position 3980 is an O-(pantetheine 4'-phosphoryl)serine (S3980). The tract at residues 4051 to 4416 is condensation 5; the sequence is EHIYPATPLQ…EYSICVELEA (366 aa). The region spanning 4496-4569 is the Carrier 6 domain; it reads SLLEERIRDT…KMAEIVNSAR (74 aa). O-(pantetheine 4'-phosphoryl)serine is present on S4530. The condensation 6 stretch occupies residues 4610-4913; the sequence is FLPATAGQVY…IQSDLHEIGS (304 aa). The segment at 5013–5048 is disordered; that stretch reads DVYKVSPPGSQLSQDSPEKQEANNKPSPQPSVDIEA.

It belongs to the NRP synthetase family.

Its pathway is siderophore biosynthesis. Functionally, nonribosomal peptide synthetase; part of the siderophore biosynthetic pathway. Arthroderma benhamiae produces 2 types of extracellular siderophores, ferrichrome C and ferricrocin. The biosynthesis of these siderophores depends on the hydroxylation of ornithine to N(5)-hydroxyornithine, catalyzed by the monooxygenase sidA. The structure of ferricrocin differs from ferrichrome C only by a serine for alanine substitution and the assembly of both siderophores is suggested to be performed by the nonribosomal peptide synthase (NRPS) sidC. The chain is Nonribosomal peptide synthetase sidC from Arthroderma benhamiae (strain ATCC MYA-4681 / CBS 112371) (Trichophyton mentagrophytes).